The primary structure comprises 701 residues: Polyribonucleotide nucleotidyltransferase (701 aa).

Residues Asp-487 and Asp-493 each coordinate Mg(2+). In terms of domain architecture, KH spans 554–613; the sequence is PTMLQMKIDSDKIRDVIGKGGATIRAICEETKASIDIEDDGSVKIYGETKEAAEAAKQRV. An S1 motif domain is found at 623-691; the sequence is GKIYVGKVER…NRGRIKLSIK (69 aa).

It belongs to the polyribonucleotide nucleotidyltransferase family. In terms of assembly, component of the RNA degradosome, which is a multiprotein complex involved in RNA processing and mRNA degradation. It depends on Mg(2+) as a cofactor.

It is found in the cytoplasm. It carries out the reaction RNA(n+1) + phosphate = RNA(n) + a ribonucleoside 5'-diphosphate. Its function is as follows. Involved in mRNA degradation. Catalyzes the phosphorolysis of single-stranded polyribonucleotides processively in the 3'- to 5'-direction. This Pseudomonas paraeruginosa (strain DSM 24068 / PA7) (Pseudomonas aeruginosa (strain PA7)) protein is Polyribonucleotide nucleotidyltransferase.